The chain runs to 147 residues: Cyanate hydratase (147 aa).

Residues R88, E91, and S114 contribute to the active site.

Belongs to the cyanase family.

The enzyme catalyses cyanate + hydrogencarbonate + 3 H(+) = NH4(+) + 2 CO2. Functionally, catalyzes the reaction of cyanate with bicarbonate to produce ammonia and carbon dioxide. This chain is Cyanate hydratase, found in Polaromonas sp. (strain JS666 / ATCC BAA-500).